The following is an 83-amino-acid chain: Alpha-conotoxin QcIA (83 aa).

The signal sequence occupies residues 1–21 (MGMRMMFTLFLLAVLSTTVVS). Positions 22–48 (FTLDRASNGRDAAADSKAADQIAQTVR) are excised as a propeptide. Intrachain disulfides connect Cys-51-Cys-57 and Cys-52-Cys-65. Positions 53-55 (SNP) are ser-Xaa-Pro motif, crucial for potent interaction with nAChR. A propeptide spanning residues 66-83 (RRTLMLQNPLNHDMSPSA) is cleaved from the precursor.

The protein belongs to the conotoxin A superfamily. In terms of tissue distribution, expressed by the venom duct.

The protein localises to the secreted. Functionally, alpha-conotoxins bind to the nicotinic acetylcholine receptors (nAChR) and inhibit them. A synthetic amidated version of this toxin potently and preferentially antagonizes neuronal rat alpha-3-beta-2 (IC(50)=55.7 nM) and alpha-6/alpha-3-beta-4 (IC(50)=90.69 nM) nAChRs. The protein is Alpha-conotoxin QcIA of Conus quercinus (Oak cone).